We begin with the raw amino-acid sequence, 868 residues long: Leucine--tRNA ligase (868 aa).

The short motif at P42–H52 is the 'HIGH' region element. A 'KMSKS' region motif is present at residues K627–S631. ATP is bound at residue K630.

This sequence belongs to the class-I aminoacyl-tRNA synthetase family.

It localises to the cytoplasm. It catalyses the reaction tRNA(Leu) + L-leucine + ATP = L-leucyl-tRNA(Leu) + AMP + diphosphate. The sequence is that of Leucine--tRNA ligase from Pseudomonas putida (strain ATCC 47054 / DSM 6125 / CFBP 8728 / NCIMB 11950 / KT2440).